Here is a 203-residue protein sequence, read N- to C-terminus: Pyrrolidone-carboxylate peptidase 1 (203 aa).

Residues Glu78, Cys141, and His165 contribute to the active site.

This sequence belongs to the peptidase C15 family. In terms of assembly, homotetramer.

The protein localises to the cytoplasm. The enzyme catalyses Release of an N-terminal pyroglutamyl group from a polypeptide, the second amino acid generally not being Pro.. In terms of biological role, removes 5-oxoproline from various penultimate amino acid residues except L-proline. This chain is Pyrrolidone-carboxylate peptidase 1, found in Caldanaerobacter subterraneus subsp. tengcongensis (strain DSM 15242 / JCM 11007 / NBRC 100824 / MB4) (Thermoanaerobacter tengcongensis).